Consider the following 88-residue polypeptide: Small ribosomal subunit protein bS20 (88 aa).

It belongs to the bacterial ribosomal protein bS20 family.

Binds directly to 16S ribosomal RNA. This is Small ribosomal subunit protein bS20 from Clostridium acetobutylicum (strain ATCC 824 / DSM 792 / JCM 1419 / IAM 19013 / LMG 5710 / NBRC 13948 / NRRL B-527 / VKM B-1787 / 2291 / W).